Reading from the N-terminus, the 456-residue chain is Phospholipase A1 member A (456 aa).

An N-terminal signal peptide occupies residues 1-25 (MPPDFWERCFWLWGLLLWLSVGSTG). An N-linked (GlcNAc...) asparagine glycan is attached at Asn34. The Nucleophile role is filled by Ser166. Catalysis depends on Asp190, which acts as the Charge relay system. Cys245 and Cys258 are oxidised to a cystine. His260 serves as the catalytic Charge relay system. 2 cysteine pairs are disulfide-bonded: Cys282–Cys293 and Cys296–Cys304.

Belongs to the AB hydrolase superfamily. Lipase family.

Its subcellular location is the secreted. It carries out the reaction a 1,2-diacyl-sn-glycero-3-phospho-L-serine + H2O = a 2-acyl-sn-glycero-3-phospho-L-serine + a fatty acid + H(+). The enzyme catalyses 1,2-di-(9Z)-octadecenoyl-sn-glycero-3-phospho-L-serine + H2O = 2-(9Z-octadecenoyl)-sn-glycero-3-phospho-L-serine + (9Z)-octadecenoate + H(+). The catalysed reaction is 1-hexadecanoyl-2-(5Z,8Z,11Z,14Z-eicosatetraenoyl)-sn-glycero-3-phospho-L-serine + H2O = 2-(5Z,8Z,11Z,14Z)-eicosatetraenoyl-sn-glycero-3-phospho-L-serine + hexadecanoate + H(+). It catalyses the reaction a 1-acyl-sn-glycero-3-phospho-L-serine + H2O = sn-glycero-3-phospho-L-serine + a fatty acid + H(+). It carries out the reaction 1-(9Z-octadecenoyl)-sn-glycero-3-phospho-L-serine + H2O = sn-glycero-3-phospho-L-serine + (9Z)-octadecenoate + H(+). Its function is as follows. Hydrolyzes the ester bond of the acyl group attached at the sn-1 position of phosphatidylserines (phospholipase A1 activity) and 1-acyl-2-lysophosphatidylserines (lysophospholipase activity) in the pathway of phosphatidylserines acyl chain remodeling. Cleaves phosphatidylserines exposed on the outer leaflet of the plasma membrane of apoptotic cells producing 2-acyl-1-lysophosphatidylserines, which in turn enhance mast cell activation and histamine production. Has no activity toward other glycerophospholipids including phosphatidylcholines, phosphatidylethanolamines, phosphatidic acids or phosphatidylinositols, or glycerolipids such as triolein. This chain is Phospholipase A1 member A (PLA1A), found in Bos taurus (Bovine).